Reading from the N-terminus, the 432-residue chain is Amino-acid acetyltransferase (432 aa).

The N-acetyltransferase domain occupies 286–425 (EKLREATIED…ASLYNYQRQS (140 aa)).

The protein belongs to the acetyltransferase family. ArgA subfamily.

The protein resides in the cytoplasm. It catalyses the reaction L-glutamate + acetyl-CoA = N-acetyl-L-glutamate + CoA + H(+). Its pathway is amino-acid biosynthesis; L-arginine biosynthesis; N(2)-acetyl-L-ornithine from L-glutamate: step 1/4. This is Amino-acid acetyltransferase from Azotobacter vinelandii (strain DJ / ATCC BAA-1303).